The primary structure comprises 214 residues: Thymidylate kinase (214 aa).

12 to 19 is an ATP binding site; that stretch reads GLDGSGKS.

It belongs to the thymidylate kinase family.

The catalysed reaction is dTMP + ATP = dTDP + ADP. Phosphorylation of dTMP to form dTDP in both de novo and salvage pathways of dTTP synthesis. The chain is Thymidylate kinase from Bdellovibrio bacteriovorus (strain ATCC 15356 / DSM 50701 / NCIMB 9529 / HD100).